Reading from the N-terminus, the 175-residue chain is Acireductone dioxygenase (175 aa).

Positions 81, 83, 87, and 126 each coordinate Fe(2+). The Ni(2+) site is built by histidine 81, histidine 83, glutamate 87, and histidine 126.

This sequence belongs to the acireductone dioxygenase (ARD) family. Fe(2+) serves as cofactor. The cofactor is Ni(2+).

Its subcellular location is the cytoplasm. The protein localises to the nucleus. The enzyme catalyses 1,2-dihydroxy-5-(methylsulfanyl)pent-1-en-3-one + O2 = 4-methylsulfanyl-2-oxobutanoate + formate + 2 H(+). It carries out the reaction 1,2-dihydroxy-5-(methylsulfanyl)pent-1-en-3-one + O2 = 3-(methylsulfanyl)propanoate + CO + formate + 2 H(+). Its pathway is amino-acid biosynthesis; L-methionine biosynthesis via salvage pathway; L-methionine from S-methyl-5-thio-alpha-D-ribose 1-phosphate: step 5/6. In terms of biological role, catalyzes 2 different reactions between oxygen and the acireductone 1,2-dihydroxy-3-keto-5-methylthiopentene (DHK-MTPene) depending upon the metal bound in the active site. Fe-containing acireductone dioxygenase (Fe-ARD) produces formate and 2-keto-4-methylthiobutyrate (KMTB), the alpha-ketoacid precursor of methionine in the methionine recycle pathway. Ni-containing acireductone dioxygenase (Ni-ARD) produces methylthiopropionate, carbon monoxide and formate, and does not lie on the methionine recycle pathway. The chain is Acireductone dioxygenase from Phaeosphaeria nodorum (strain SN15 / ATCC MYA-4574 / FGSC 10173) (Glume blotch fungus).